The chain runs to 75 residues: MKIVLIGLIRGYRTFISPLFPPSCRFQPTCSQYGIEAIERFGAIKGAWLTLGRILRCHPFHPGGYDPVPPVKPKK.

This sequence belongs to the UPF0161 family.

The protein resides in the cell inner membrane. Its function is as follows. Could be involved in insertion of integral membrane proteins into the membrane. The protein is Putative membrane protein insertion efficiency factor of Gloeothece citriformis (strain PCC 7424) (Cyanothece sp. (strain PCC 7424)).